The primary structure comprises 254 residues: Type III pantothenate kinase (254 aa).

6–13 is an ATP binding site; it reads DVGNTNTV. Substrate is bound by residues Tyr-100 and 107-110; that span reads GADR. The Proton acceptor role is filled by Asp-109. Asp-129 lines the K(+) pocket. Thr-132 is a binding site for ATP. Thr-184 provides a ligand contact to substrate.

This sequence belongs to the type III pantothenate kinase family. In terms of assembly, homodimer. The cofactor is NH4(+). Requires K(+) as cofactor.

It is found in the cytoplasm. The catalysed reaction is (R)-pantothenate + ATP = (R)-4'-phosphopantothenate + ADP + H(+). It functions in the pathway cofactor biosynthesis; coenzyme A biosynthesis; CoA from (R)-pantothenate: step 1/5. In terms of biological role, catalyzes the phosphorylation of pantothenate (Pan), the first step in CoA biosynthesis. This is Type III pantothenate kinase from Halalkalibacterium halodurans (strain ATCC BAA-125 / DSM 18197 / FERM 7344 / JCM 9153 / C-125) (Bacillus halodurans).